The sequence spans 765 residues: FHF complex subunit HOOK interacting protein 2A (765 aa).

Disordered stretches follow at residues 193–236 (TLKG…DHLS) and 532–561 (TDIS…KNDG). 2 stretches are compositionally biased toward polar residues: residues 196–208 (GQDS…GQSR) and 535–550 (SPEN…SSSP).

The protein belongs to the FHIP family. Expressed in all tissues tested, highly expressed brain. As to expression, only detected at high levels in testis.

Its function is as follows. Required for proper functioning of the nervous system. The polypeptide is FHF complex subunit HOOK interacting protein 2A (Homo sapiens (Human)).